The chain runs to 88 residues: Putative membrane protein insertion efficiency factor (88 aa).

A disordered region spans residues 67-88 (LNAGGYDPVPPKSDNHSKENKK). Over residues 79–88 (SDNHSKENKK) the composition is skewed to basic and acidic residues.

It belongs to the UPF0161 family.

The protein localises to the cell inner membrane. Could be involved in insertion of integral membrane proteins into the membrane. The polypeptide is Putative membrane protein insertion efficiency factor (Actinobacillus succinogenes (strain ATCC 55618 / DSM 22257 / CCUG 43843 / 130Z)).